Reading from the N-terminus, the 269-residue chain is Undecaprenyl-diphosphatase (269 aa).

A run of 8 helical transmembrane segments spans residues 3-23 (LLIK…LPIS), 41-61 (FATM…VFYY), 78-98 (GFNL…IGLL), 107-127 (LFSP…MIVI), 148-167 (SLLI…SRSA), 184-204 (AEFS…LSLL), 213-233 (LEWQ…LFVV), and 248-268 (FAYY…EKIV).

Belongs to the UppP family.

The protein localises to the cell membrane. It catalyses the reaction di-trans,octa-cis-undecaprenyl diphosphate + H2O = di-trans,octa-cis-undecaprenyl phosphate + phosphate + H(+). In terms of biological role, catalyzes the dephosphorylation of undecaprenyl diphosphate (UPP). Confers resistance to bacitracin. The sequence is that of Undecaprenyl-diphosphatase from Thermoanaerobacter sp. (strain X514).